The chain runs to 63 residues: Large ribosomal subunit protein bL28 (63 aa).

Residues 1–22 are disordered; sequence MSRRCAITGKSAMNGHSVSHAN.

It belongs to the bacterial ribosomal protein bL28 family.

In Campylobacter hominis (strain ATCC BAA-381 / DSM 21671 / CCUG 45161 / LMG 19568 / NCTC 13146 / CH001A), this protein is Large ribosomal subunit protein bL28.